The sequence spans 111 residues: UPF0235 protein glr3835 (111 aa).

Belongs to the UPF0235 family.

The chain is UPF0235 protein glr3835 from Gloeobacter violaceus (strain ATCC 29082 / PCC 7421).